The chain runs to 1097 residues: Importin-5 (1097 aa).

At A2 the chain carries N-acetylalanine. HEAT repeat units follow at residues 5-38 (AAEQ…NIPG), 43-77 (TFLL…FDEV), 95-122 (MIIQ…NLID), 130-157 (PEGL…IFWN), 167-201 (QHYL…AAFI), 210-246 (LFKH…IADT), 254-289 (HLEA…LSET), 298-350 (TNIV…ACGL), 352-386 (GKLV…SAIG), 390-430 (HQQM…ATDF), 432-472 (PGFQ…FTED), 475-523 (KSLL…ADTA), 525-568 (EKFV…GLAV), 570-615 (KEKF…CKIL), 617-692 (KEFQ…AKEL), 695-737 (GFVE…ARVR), 741-780 (YLTQ…IEVM), 787-853 (NEHF…FSSY), 856-895 (KVLP…IEHC), 903-935 (AEYF…MAQY), 943-983 (FCTE…MKFK), 990-1021 (EEVL…DLIE), 1032-1067 (NTNL…VVRQ), and 1070-1093 (TSGG…IQEL). Positions 28 to 99 (QAEETYENIP…KSELLMIIQM (72 aa)) constitute an Importin N-terminal domain. The ran-GTP binding stretch occupies residues 325-375 (DELEDDDFDSNAVAGESALDRMACGLGGKLVLPMIKEHIMQMLQNPDWKYR). At S827 the chain carries Phosphoserine.

Belongs to the importin beta family. Importin beta-3 subfamily. In terms of assembly, interacts with RPS7 and RPL5. Interacts with RPL23A (via BIB domain). Interacts with H2A, H2B, H3 and H4 histones. Interacts with CPEB3; this mediates CPEB3 nuclear import following neuronal stimulation which enhances the interaction in a RAN-regulated manner. Interacts with AIFM2; this interaction likely mediates the translocation of AIFM2 into the nucleus upon oxidative stress. Interacts with STX3 (isoform 3). Interacts with SRP19. As to quaternary structure, (Microbial infection) Interacts with HIV-1 Rev.

The protein resides in the cytoplasm. The protein localises to the nucleus. Its subcellular location is the nucleolus. In terms of biological role, functions in nuclear protein import as nuclear transport receptor. Serves as receptor for nuclear localization signals (NLS) in cargo substrates. Is thought to mediate docking of the importin/substrate complex to the nuclear pore complex (NPC) through binding to nucleoporin and the complex is subsequently translocated through the pore by an energy requiring, Ran-dependent mechanism. At the nucleoplasmic side of the NPC, Ran binds to the importin, the importin/substrate complex dissociates and importin is re-exported from the nucleus to the cytoplasm where GTP hydrolysis releases Ran. The directionality of nuclear import is thought to be conferred by an asymmetric distribution of the GTP- and GDP-bound forms of Ran between the cytoplasm and nucleus. Mediates the nuclear import of ribosomal proteins RPL23A, RPS7 and RPL5. In vitro, mediates nuclear import of H2A, H2B, H3 and H4 histones. Binds to CPEB3 and mediates its nuclear import following neuronal stimulation. In case of HIV-1 infection, binds and mediates the nuclear import of HIV-1 Rev. This Homo sapiens (Human) protein is Importin-5 (IPO5).